A 1071-amino-acid chain; its full sequence is DNA-directed RNA polymerase subunit beta (1071 aa).

Belongs to the RNA polymerase beta chain family. In terms of assembly, in plastids the minimal PEP RNA polymerase catalytic core is composed of four subunits: alpha, beta, beta', and beta''. When a (nuclear-encoded) sigma factor is associated with the core the holoenzyme is formed, which can initiate transcription.

The protein localises to the plastid. It localises to the chloroplast. The enzyme catalyses RNA(n) + a ribonucleoside 5'-triphosphate = RNA(n+1) + diphosphate. Its function is as follows. DNA-dependent RNA polymerase catalyzes the transcription of DNA into RNA using the four ribonucleoside triphosphates as substrates. The polypeptide is DNA-directed RNA polymerase subunit beta (Nymphaea alba (White water-lily)).